The following is a 242-amino-acid chain: Uridylate kinase (242 aa).

16–19 (KVSG) provides a ligand contact to ATP. UMP is bound at residue Gly58. 2 residues coordinate ATP: Gly59 and Arg63. Residues Asp78 and 139 to 146 (TGNPFCTT) each bind UMP. The ATP site is built by Thr166, Gln167, Tyr172, and Asp175.

This sequence belongs to the UMP kinase family. In terms of assembly, homohexamer.

It is found in the cytoplasm. It catalyses the reaction UMP + ATP = UDP + ADP. It participates in pyrimidine metabolism; CTP biosynthesis via de novo pathway; UDP from UMP (UMPK route): step 1/1. Inhibited by UTP. Functionally, catalyzes the reversible phosphorylation of UMP to UDP. The protein is Uridylate kinase of Rickettsia canadensis (strain McKiel).